Here is a 329-residue protein sequence, read N- to C-terminus: Synaptonemal complex central element protein 1 (329 aa).

Residues 1-29 (MATRPQPLGMEPEGSADLLHGPEGARGQY) form a disordered region. 2 coiled-coil regions span residues 54–167 (RIEV…LETL) and 194–294 (KEQL…ILAH). Residues 291–329 (ILAHSTQNEEDSSWRMASPKPVEVHEETAQDQERPSSRT) are disordered. Positions 312–329 (VEVHEETAQDQERPSSRT) are enriched in basic and acidic residues.

The protein belongs to the SYCE family. As to quaternary structure, homodimer. Found in a complex with SYCP1 and SYCE2. Interacts with SYCP1, SYCE2 and SYCE3. Interacts with SIX6OS1. Meiotic cells (at protein level). Expressed in the ovary and testis.

It localises to the nucleus. Its subcellular location is the chromosome. Its function is as follows. Major component of the transverse central element of synaptonemal complexes (SCS), formed between homologous chromosomes during meiotic prophase. Requires SYCP1 in order to be incorporated into the central element. May have a role in the synaptonemal complex assembly, stabilization and recombination. This is Synaptonemal complex central element protein 1 (Syce1) from Mus musculus (Mouse).